A 779-amino-acid chain; its full sequence is Acyl-CoA dehydrogenase family member 11 (779 aa).

3 positions are modified to N6-acetyllysine: K163, K166, and K175. Position 210 is a phosphoserine (S210). Y323 is modified (phosphotyrosine). Residues K368 and K390 each carry the N6-succinyllysine modification. FAD contacts are provided by residues 503–513 (FCMTEPNVSSS), 511–513 (SSS), 537–539 (WSS), and S539. S513 is a substrate binding site. 628–631 (GPGR) is a binding site for substrate. Residues R656, Q726, and 726–730 (QVHGG) contribute to the FAD site. Substrate is bound at residue G754. Residues 755-757 (PDE) and E757 contribute to the FAD site. K765 is modified (N6-acetyllysine).

It belongs to the acyl-CoA dehydrogenase family. Homodimer. Requires FAD as cofactor.

It is found in the peroxisome. The protein resides in the mitochondrion membrane. The enzyme catalyses a 2,3-saturated acyl-CoA + oxidized [electron-transfer flavoprotein] + H(+) = a (2E)-enoyl-CoA + reduced [electron-transfer flavoprotein]. It carries out the reaction docosanoyl-CoA + oxidized [electron-transfer flavoprotein] + H(+) = (2E)-docosenoyl-CoA + reduced [electron-transfer flavoprotein]. It catalyses the reaction tetracosanoyl-CoA + oxidized [electron-transfer flavoprotein] + H(+) = (2E)-tetracosenoyl-CoA + reduced [electron-transfer flavoprotein]. The catalysed reaction is eicosanoyl-CoA + oxidized [electron-transfer flavoprotein] + H(+) = (2E)-eicosenoyl-CoA + reduced [electron-transfer flavoprotein]. The enzyme catalyses hexacosanoyl-CoA + oxidized [electron-transfer flavoprotein] + H(+) = (2E)-hexacosenoyl-CoA + reduced [electron-transfer flavoprotein]. It carries out the reaction tricosanoyl-CoA + oxidized [electron-transfer flavoprotein] + H(+) = (2E)-tricosenoyl-CoA + reduced [electron-transfer flavoprotein]. Its pathway is lipid metabolism; fatty acid beta-oxidation. Its function is as follows. Acyl-CoA dehydrogenase, that exhibits maximal activity towards saturated C22-CoA. Probably participates in beta-oxydation and energy production but could also play a role in the metabolism of specific fatty acids to control fatty acids composition of cellular lipids in brain. In Mus musculus (Mouse), this protein is Acyl-CoA dehydrogenase family member 11 (Acad11).